The primary structure comprises 160 residues: Twist-related protein 2 (160 aa).

Residues 1–63 (MEEGSSSPVS…GSPSAQSFEE (63 aa)) are disordered. The span at 27–37 (KRFGRKRRYSK) shows a compositional bias: basic residues. Residues 66–117 (SQRILANVRERQRTQSLNEAFAALRKIIPTLPSDKLSKIQTLKLAARYIDFL) enclose the bHLH domain.

In terms of assembly, efficient DNA binding requires dimerization with another bHLH protein. Forms a heterodimer with TCF3/E12. Also interacts with MEF2C. As to expression, in the embryo, highly expressed in chondrogenic cells. In embryonic skin, expressed in the undifferentiated mesenchymal layer beneath the epidermis which later develops into the dermis. Expressed in early myeloid cells but not in lymphoid cells in the liver. Expression also detected in the secretory ependymal epithelium of the choroid plexus primordium. In the adult, expressed in secreting glandular tissues and tubules.

It is found in the nucleus. The protein localises to the cytoplasm. Functionally, binds to the E-box consensus sequence 5'-CANNTG-3' as a heterodimer and inhibits transcriptional activation by MYOD1, MYOG, MEF2A and MEF2C. Also represses expression of pro-inflammatory cytokines such as TNFA and IL1B. Involved in postnatal glycogen storage and energy metabolism. Inhibits the premature or ectopic differentiation of preosteoblast cells during osteogenesis, possibly by changing the internal signal transduction response of osteoblasts to external growth factors. This Homo sapiens (Human) protein is Twist-related protein 2 (TWIST2).